Here is a 428-residue protein sequence, read N- to C-terminus: MTESERKQIIALIQREVIPAIGCTEPIAVALCVAKATETLGAKPEKIKVLLSANILKNAMGVGIPGTGMIGLPIAVALGALIGKSDYQLEVLKDSTPEAVEEGKKLIDEKRICISLKEDITEKLYIEVTCEAGGEQATAIISGGHTTFVYVAKGDEVLLNKQQTSGEEEEEETLELTLRKVYDFALTAPLDEIRFILETARLNKKAAEQSFQGDYGHALGKMLRGTYEHKIMGDSVFSHILSYTSAACDARMAGAMIPVMSNSGSGNQGISATLPVVVYAEENGKSEEELIRALMMSHLTVIYIKQSLGRLSALCGCVVAATGSSCGITWLMGGSYKQVAFAVQNMIANLTGMICDGAKPSCALKVTTGVSTAVLSAVMAMENRCVTSVEGIIDEDVDQSIRNLTRIGSQGMNETDRVVLDIMTHKGC.

This sequence belongs to the UPF0597 family.

This is UPF0597 protein BF3772 from Bacteroides fragilis (strain YCH46).